Consider the following 186-residue polypeptide: Protein TRL14 (186 aa).

Asparagine 24, asparagine 64, and asparagine 72 each carry an N-linked (GlcNAc...) asparagine; by host glycan. Residues 143–163 traverse the membrane as a helical segment; sequence HAVWAGVVVSVALIALYMGSH.

It belongs to the RL11 family.

It localises to the virion membrane. This Human cytomegalovirus (strain AD169) (HHV-5) protein is Protein TRL14.